Consider the following 1203-residue polypeptide: Plasma membrane calcium-transporting ATPase 4 (1203 aa).

Residues 1 to 92 (MTNPSGHNLP…NMIPPKKPKT (92 aa)) lie on the Cytoplasmic side of the membrane. Phosphoserine is present on Ser13. A helical transmembrane segment spans residues 93–113 (FLELVWEALQDVTLIILEIAA). Over 114–150 (IISLVLSFYRPPGGENEICGHIVSNPEEDEEGETGWI) the chain is Extracellular. Residues 151-171 (EGAAILASVIIVVFVTAFNDW) form a helical membrane-spanning segment. Over 172–356 (SKEKQFRGLQ…KEKSVLQGKL (185 aa)) the chain is Cytoplasmic. Residues 294-319 (DDEKKKKGKKQGVSENRNKAKTQDGV) form a disordered region. A phosphoserine mark is found at Ser328 and Ser334. The disordered stretch occupies residues 330-349 (EGLDSEEKEKKASKGPKKEK). The span at 334 to 349 (SEEKEKKASKGPKKEK) shows a compositional bias: basic and acidic residues. A helical membrane pass occupies residues 357-376 (TRLAVQIGKAGLIMSILTVL). At 377 to 409 (ILILYFVVDNFVIQRRAWLPECTPVYIQYFVKF) the chain is on the extracellular side. Residues 410-427 (FIIGVTVLVVAVPEGLPL) form a helical membrane-spanning segment. At 428-840 (AVTISLAYSV…MWGRNVYDSI (413 aa)) the chain is on the cytoplasmic side. Asp465 acts as the 4-aspartylphosphate intermediate in catalysis. Residues Asp785 and Asp789 each coordinate Mg(2+). The helical transmembrane segment at 841 to 860 (SKFLQFQLTVNVVAVIVAFS) threads the bilayer. Topologically, residues 861 to 870 (GACITQDSPL) are extracellular. Residues 871–891 (KAVQMLWVNLIMDTFASLALA) form a helical membrane-spanning segment. The Cytoplasmic portion of the chain corresponds to 892 to 911 (TEPPTDSLLRRRPYGRNKPL). Residues 912-934 (ISRTMMKNILGHAVYQLGIVFLL) traverse the membrane as a helical segment. Topologically, residues 935-952 (VFAGDKLFDIDSGRKAPL) are extracellular. A helical transmembrane segment spans residues 953–974 (NSPPSQHYTIVFNTFVLMQLFN). The Cytoplasmic segment spans residues 975 to 993 (EINSRKIHGEKNVFAGVYR). Residues 994–1015 (NIIFCSVVLGTFFCQILIVEVG) traverse the membrane as a helical segment. The Extracellular portion of the chain corresponds to 1016–1025 (GKPFSCTNLT). The helical transmembrane segment at 1026 to 1047 (MEQWMWCLFIGIGELLWGQVIS) threads the bilayer. At 1048–1203 (AIPTKSLKFL…SPLQSQETPV (156 aa)) the chain is on the cytoplasmic side. Phosphoserine occurs at positions 1064 and 1070. The segment at 1086–1103 (LRRGQILWVRGLNRIQTQ) is calmodulin-binding subdomain A. Phosphothreonine; by PKC is present on Thr1102. A Phosphoserine modification is found at Gln1103. Positions 1104-1113 (IRVVKVFHSF) are calmodulin-binding subdomain B. 4 positions are modified to phosphoserine: Arg1114, Asp1115, Ile1126, and Ser1144.

This sequence belongs to the cation transport ATPase (P-type) (TC 3.A.3) family. Type IIB subfamily. In terms of assembly, interacts with PDZD11. Interacts with SLC35G1 and STIM1. Interacts with calmodulin. As to expression, ubiquitously expressed. Not detected in liver. The highest levels are found in uterus and stomach. Isoform XA is found in uterus, brain, stomach, small intestine, colon and pancreas. Isoform XB is found in uterus, skeletal muscle, lung, kidney, spleen, stomach, small intestine and pancreas. Isoform ZA is found in testis and isoform ZB is found in testis and heart.

Its subcellular location is the cell membrane. It localises to the cell projection. The protein localises to the cilium. The protein resides in the flagellum membrane. The catalysed reaction is Ca(2+)(in) + ATP + H2O = Ca(2+)(out) + ADP + phosphate + H(+). Activated by calcium/calmodulin. Calcium/calmodulin-regulated and magnesium-dependent enzyme that catalyzes the hydrolysis of ATP coupled with the transport of calcium out of the cell. By regulating sperm cell calcium homeostasis, may play a role in sperm motility. The sequence is that of Plasma membrane calcium-transporting ATPase 4 from Rattus norvegicus (Rat).